We begin with the raw amino-acid sequence, 1064 residues long: Adenylate cyclase type 4 (1064 aa).

Residues 1–28 (MARLFSPRPPPSEDLFYETYYSLSQQYP) are Cytoplasmic-facing. 6 helical membrane-spanning segments follow: residues 29-50 (LLILLLVIVLCAIVALPAVAWA), 61-80 (FLTTVLCALGGFSLLLGLAS), 94-117 (GLIWAALLALGYGFLFTGGVVSAW), 120-138 (VSFFLFIIFTVYAMLPLGM), 141-162 (AAAAGVISSLSHLLVLGLYLGW), and 170-190 (LLPQLAANAVLFLCGNVVGAY). Residues 191-582 (HKALMERALR…YRLSALPAFK (392 aa)) are Cytoplasmic-facing. Residues Asp278, Ile279, and Asp322 each contribute to the Mg(2+) site. ATP-binding positions include 278 to 283 (DIVGFT), 320 to 322 (LGD), and Arg366. The tract at residues 498–523 (DSPASTSTPLPEKAFSPQWSLDRSRT) is disordered. Ser517 carries the post-translational modification Phosphoserine. At Thr533 the chain carries Phosphothreonine. 3 consecutive transmembrane segments (helical) span residues 583-604 (YYAACTFLVFLSNFTIQMLVTT), 608-630 (ALATTYSITFLLFLLLLFVCFSE), and 661-684 (VALGTATILLVFTMAVVSLLFLPV). Residues 685–707 (SSDCPFLAPNVSSVAFNTSWELP) lie on the Extracellular side of the membrane. 2 N-linked (GlcNAc...) asparagine glycosylation sites follow: Asn694 and Asn701. The next 3 helical transmembrane spans lie at 708-733 (ASLPLISIPYSMHCCVLGFLSCSLFL), 741-761 (LLLLLLWLVASCSLFLHSHAW), and 788-804 (MGAIYFFIFFFTLLVLA). The Cytoplasmic segment spans residues 805 to 1064 (RQNEYYCRLD…LTRTGSPSAS (260 aa)). Residues Lys914, 994–996 (DIW), 1001–1005 (NVASR), and Lys1041 each bind ATP.

It belongs to the adenylyl cyclase class-4/guanylyl cyclase family. The cofactor is Mg(2+). Mn(2+) serves as cofactor. Widely distributed.

Its subcellular location is the cell membrane. It is found in the cytoplasm. The catalysed reaction is ATP = 3',5'-cyclic AMP + diphosphate. With respect to regulation, activated by forskolin. Insensitive to calcium/calmodulin. Stimulated by GNAS and by the G-protein beta and gamma subunit complex. Catalyzes the formation of the signaling molecule cAMP in response to G-protein signaling. In Rattus norvegicus (Rat), this protein is Adenylate cyclase type 4 (Adcy4).